A 261-amino-acid polypeptide reads, in one-letter code: Acetylglutamate kinase (261 aa).

Residues 41-42 (GG), Arg-63, and Asn-157 contribute to the substrate site.

This sequence belongs to the acetylglutamate kinase family. ArgB subfamily.

The protein resides in the cytoplasm. It catalyses the reaction N-acetyl-L-glutamate + ATP = N-acetyl-L-glutamyl 5-phosphate + ADP. It participates in amino-acid biosynthesis; L-arginine biosynthesis; N(2)-acetyl-L-ornithine from L-glutamate: step 2/4. Catalyzes the ATP-dependent phosphorylation of N-acetyl-L-glutamate. This chain is Acetylglutamate kinase, found in Koribacter versatilis (strain Ellin345).